A 592-amino-acid chain; its full sequence is Probable translation initiation factor IF-2 (592 aa).

A tr-type G domain is found at 5 to 226 (IRSPFVVVMG…AGVSQRFIPR (222 aa)). The tract at residues 14–21 (GHVDVGKT) is G1. A GTP-binding site is contributed by 14–21 (GHVDVGKT). The G2 stretch occupies residues 39 to 43 (MITQH). The G3 stretch occupies residues 80-83 (DTPG). GTP contacts are provided by residues 80–84 (DTPGH) and 134–137 (NKLD). Positions 134 to 137 (NKLD) are G4. The tract at residues 202–204 (SAV) is G5.

Belongs to the TRAFAC class translation factor GTPase superfamily. Classic translation factor GTPase family. IF-2 subfamily.

Its function is as follows. Function in general translation initiation by promoting the binding of the formylmethionine-tRNA to ribosomes. Seems to function along with eIF-2. The polypeptide is Probable translation initiation factor IF-2 (Pyrobaculum calidifontis (strain DSM 21063 / JCM 11548 / VA1)).